Reading from the N-terminus, the 142-residue chain is Hemoglobin subunit alpha-1 (142 aa).

The 141-residue stretch at 2-142 folds into the Globin domain; sequence KLSADDKHNV…VGYVLASKYR (141 aa). Position 59 (H59) interacts with O2. Position 88 (H88) interacts with heme b.

It belongs to the globin family. Major hemoglobin is a heterotetramer of two alpha-1 chains and two beta-1 chains. Red blood cells.

Its function is as follows. Involved in oxygen transport from the lung to the various peripheral tissues. The polypeptide is Hemoglobin subunit alpha-1 (Triturus cristatus (Great crested newt)).